A 354-amino-acid chain; its full sequence is tRNA-specific 2-thiouridylase MnmA (354 aa).

Residues 6–13 and Leu-33 contribute to the ATP site; that span reads LLSGGVDS. The active-site Nucleophile is Cys-100. Cysteines 100 and 195 form a disulfide. Gly-123 provides a ligand contact to ATP. The interval 145–147 is interaction with tRNA; it reads KDQ. Catalysis depends on Cys-195, which acts as the Cysteine persulfide intermediate.

The protein belongs to the MnmA/TRMU family.

It is found in the cytoplasm. It carries out the reaction S-sulfanyl-L-cysteinyl-[protein] + uridine(34) in tRNA + AH2 + ATP = 2-thiouridine(34) in tRNA + L-cysteinyl-[protein] + A + AMP + diphosphate + H(+). Its function is as follows. Catalyzes the 2-thiolation of uridine at the wobble position (U34) of tRNA, leading to the formation of s(2)U34. This Borrelia turicatae (strain 91E135) protein is tRNA-specific 2-thiouridylase MnmA.